The following is a 74-amino-acid chain: Beta-defensin 39 (74 aa).

The first 23 residues, 1–23 (MKISYFLLLILSLGSSQINPVSG), serve as a signal peptide directing secretion. 3 disulfides stabilise this stretch: cysteine 29–cysteine 58, cysteine 36–cysteine 51, and cysteine 41–cysteine 59.

It belongs to the beta-defensin family. Only expressed in epididymis (caput, corpus and cauda).

The protein localises to the secreted. In terms of biological role, has antibacterial activity. This is Beta-defensin 39 (Defb39) from Mus musculus (Mouse).